Consider the following 92-residue polypeptide: Defensin-like protein 226 (92 aa).

An N-terminal signal peptide occupies residues 1–27 (MKCGVLFMISCLLITFLVLSHVREVES). Disulfide bonds link C33–C92, C43–C71, C51–C86, and C69–C88.

It belongs to the DEFL family.

The protein resides in the secreted. In Arabidopsis thaliana (Mouse-ear cress), this protein is Defensin-like protein 226 (SCRL2).